A 224-amino-acid chain; its full sequence is Putative adhesin RF_1314 (224 aa).

The N-terminal stretch at 1–22 (MKKLLLIAATSATILSSSISFA) is a signal peptide.

In Rickettsia felis (strain ATCC VR-1525 / URRWXCal2) (Rickettsia azadi), this protein is Putative adhesin RF_1314.